The chain runs to 216 residues: Phosphoribosylformylglycinamidine synthase subunit PurQ (216 aa).

In terms of domain architecture, Glutamine amidotransferase type-1 spans 2-216 (SIGVIVFPGS…GRRMLEALLG (215 aa)). The active-site Nucleophile is Cys86. Catalysis depends on residues His193 and Glu195.

As to quaternary structure, part of the FGAM synthase complex composed of 1 PurL, 1 PurQ and 2 PurS subunits.

Its subcellular location is the cytoplasm. The enzyme catalyses N(2)-formyl-N(1)-(5-phospho-beta-D-ribosyl)glycinamide + L-glutamine + ATP + H2O = 2-formamido-N(1)-(5-O-phospho-beta-D-ribosyl)acetamidine + L-glutamate + ADP + phosphate + H(+). The catalysed reaction is L-glutamine + H2O = L-glutamate + NH4(+). It participates in purine metabolism; IMP biosynthesis via de novo pathway; 5-amino-1-(5-phospho-D-ribosyl)imidazole from N(2)-formyl-N(1)-(5-phospho-D-ribosyl)glycinamide: step 1/2. Part of the phosphoribosylformylglycinamidine synthase complex involved in the purines biosynthetic pathway. Catalyzes the ATP-dependent conversion of formylglycinamide ribonucleotide (FGAR) and glutamine to yield formylglycinamidine ribonucleotide (FGAM) and glutamate. The FGAM synthase complex is composed of three subunits. PurQ produces an ammonia molecule by converting glutamine to glutamate. PurL transfers the ammonia molecule to FGAR to form FGAM in an ATP-dependent manner. PurS interacts with PurQ and PurL and is thought to assist in the transfer of the ammonia molecule from PurQ to PurL. The protein is Phosphoribosylformylglycinamidine synthase subunit PurQ of Synechococcus sp. (strain CC9605).